The chain runs to 273 residues: Shikimate dehydrogenase (NADP(+)) (273 aa).

Residues 15-17 (SKS) and Thr62 each bind shikimate. Lys66 serves as the catalytic Proton acceptor. An NADP(+)-binding site is contributed by Glu78. Shikimate-binding residues include Asn87 and Asp103. NADP(+) contacts are provided by residues 127–131 (GAGGA), 150–155 (NRTQEK), and Met213. Position 215 (Tyr215) interacts with shikimate. An NADP(+)-binding site is contributed by Gly237.

It belongs to the shikimate dehydrogenase family. As to quaternary structure, homodimer.

The enzyme catalyses shikimate + NADP(+) = 3-dehydroshikimate + NADPH + H(+). It functions in the pathway metabolic intermediate biosynthesis; chorismate biosynthesis; chorismate from D-erythrose 4-phosphate and phosphoenolpyruvate: step 4/7. Involved in the biosynthesis of the chorismate, which leads to the biosynthesis of aromatic amino acids. Catalyzes the reversible NADPH linked reduction of 3-dehydroshikimate (DHSA) to yield shikimate (SA). In Shewanella woodyi (strain ATCC 51908 / MS32), this protein is Shikimate dehydrogenase (NADP(+)).